The sequence spans 71 residues: Small ribosomal subunit protein bS21 (71 aa).

Belongs to the bacterial ribosomal protein bS21 family.

The sequence is that of Small ribosomal subunit protein bS21 from Marinobacter nauticus (strain ATCC 700491 / DSM 11845 / VT8) (Marinobacter aquaeolei).